The sequence spans 203 residues: A-type ATP synthase subunit E (203 aa).

The protein belongs to the V-ATPase E subunit family. Has multiple subunits with at least A(3), B(3), C, D, E, F, H, I and proteolipid K(x).

It localises to the cell membrane. Component of the A-type ATP synthase that produces ATP from ADP in the presence of a proton gradient across the membrane. The chain is A-type ATP synthase subunit E from Thermococcus kodakarensis (strain ATCC BAA-918 / JCM 12380 / KOD1) (Pyrococcus kodakaraensis (strain KOD1)).